We begin with the raw amino-acid sequence, 315 residues long: Mycothiol acetyltransferase (315 aa).

2 consecutive N-acetyltransferase domains span residues 4–141 (LDWR…RPLR) and 152–315 (VVIR…GTDN). Glu-36 is a binding site for 1D-myo-inositol 2-(L-cysteinylamino)-2-deoxy-alpha-D-glucopyranoside. Acetyl-CoA-binding positions include 80–82 (LVV) and 88–93 (RRGIGT). Residues Glu-179, Lys-224, and Glu-234 each contribute to the 1D-myo-inositol 2-(L-cysteinylamino)-2-deoxy-alpha-D-glucopyranoside site. Acetyl-CoA contacts are provided by residues 238 to 240 (LGV) and 245 to 251 (QRRGLGQ). Residue Tyr-282 coordinates 1D-myo-inositol 2-(L-cysteinylamino)-2-deoxy-alpha-D-glucopyranoside. Acetyl-CoA is bound at residue 287–292 (NVAAVR).

It belongs to the acetyltransferase family. MshD subfamily. Monomer.

The catalysed reaction is 1D-myo-inositol 2-(L-cysteinylamino)-2-deoxy-alpha-D-glucopyranoside + acetyl-CoA = mycothiol + CoA + H(+). Catalyzes the transfer of acetyl from acetyl-CoA to desacetylmycothiol (Cys-GlcN-Ins) to form mycothiol. This chain is Mycothiol acetyltransferase, found in Mycobacterium bovis (strain ATCC BAA-935 / AF2122/97).